The chain runs to 444 residues: C4-dicarboxylate transport protein 1 (444 aa).

The next 9 membrane-spanning stretches (helical) occupy residues 9 to 29 (SIFL…VGIP), 42 to 62 (FIKL…VNGI), 78 to 98 (SVIY…VVAY), 152 to 172 (ILQV…VGEQ), 190 to 210 (IMGM…AFTT), 221 to 241 (LGAL…AVLG), 307 to 327 (FSIY…TPLA), 354 to 374 (VILA…LVLV), and 380 to 400 (FMGI…TVTI).

This sequence belongs to the dicarboxylate/amino acid:cation symporter (DAACS) (TC 2.A.23) family.

It localises to the cell inner membrane. Responsible for the transport of dicarboxylates such as succinate, fumarate, and malate from the periplasm across the membrane. The sequence is that of C4-dicarboxylate transport protein 1 from Pseudomonas paraeruginosa (strain DSM 24068 / PA7) (Pseudomonas aeruginosa (strain PA7)).